The chain runs to 279 residues: Hydroxymethylpyrimidine/phosphomethylpyrimidine kinase (279 aa).

A 4-amino-5-hydroxymethyl-2-methylpyrimidine-binding site is contributed by Gln-54.

This sequence belongs to the ThiD family.

It catalyses the reaction 4-amino-5-hydroxymethyl-2-methylpyrimidine + ATP = 4-amino-2-methyl-5-(phosphooxymethyl)pyrimidine + ADP + H(+). The catalysed reaction is 4-amino-2-methyl-5-(phosphooxymethyl)pyrimidine + ATP = 4-amino-2-methyl-5-(diphosphooxymethyl)pyrimidine + ADP. The protein operates within cofactor biosynthesis; thiamine diphosphate biosynthesis; 4-amino-2-methyl-5-diphosphomethylpyrimidine from 5-amino-1-(5-phospho-D-ribosyl)imidazole: step 2/3. It participates in cofactor biosynthesis; thiamine diphosphate biosynthesis; 4-amino-2-methyl-5-diphosphomethylpyrimidine from 5-amino-1-(5-phospho-D-ribosyl)imidazole: step 3/3. Functionally, catalyzes the phosphorylation of hydroxymethylpyrimidine phosphate (HMP-P) to HMP-PP, and of HMP to HMP-P. In Mycobacterium leprae (strain TN), this protein is Hydroxymethylpyrimidine/phosphomethylpyrimidine kinase (thiD).